A 352-amino-acid polypeptide reads, in one-letter code: Fatty acid desaturase (352 aa).

2 helical membrane passes run 28 to 48 and 55 to 75; these read SLIQ…LAYL and LLTL…FIIF. The Histidine box-1 motif lies at 76–80; that stretch reads HDCCH. A helical membrane pass occupies residues 89-109; sequence YNHILGFLTGVLTLFPYLQWQ. Residues 112–116 carry the Histidine box-2 motif; sequence HSIHH. 3 helical membrane-spanning segments follow: residues 151–171, 186–206, and 209–229; these read LYRN…LITN, TYLT…IFGW, and FLLV…WLFY. Positions 274 to 278 match the Histidine box-3 motif; sequence HHVHH.

Belongs to the fatty acid desaturase type 1 family.

Its subcellular location is the cell membrane. Its pathway is lipid metabolism; fatty acid metabolism. Catalyzes the introduction of a cis-double bond at the delta(5) position of existing saturated fatty acids attached to membrane phospholipids. It is not strictly specific for palmitic acid (C16) but can also accept C14 as well as C18 species to yield unsaturated fatty acids. The protein is Fatty acid desaturase (des) of Bacillus subtilis (strain 168).